A 357-amino-acid polypeptide reads, in one-letter code: Arginine kinase (357 aa).

Positions lysine 9–glycine 91 constitute a Phosphagen kinase N-terminal domain. Position 64–68 (glycine 64–tyrosine 68) interacts with substrate. A Phosphagen kinase C-terminal domain is found at phenylalanine 119–alanine 356. Residues serine 122–arginine 126 and histidine 185 each bind ATP. Position 225 (glutamate 225) interacts with substrate. ATP is bound at residue arginine 229. Cysteine 271 is a binding site for substrate. ATP contacts are provided by residues arginine 280–histidine 284 and arginine 309–glutamate 314. Glutamate 314 is a substrate binding site.

The protein belongs to the ATP:guanido phosphotransferase family. In terms of assembly, monomer.

It is found in the cytoplasm. The catalysed reaction is L-arginine + ATP = N(omega)-phospho-L-arginine + ADP + H(+). Its function is as follows. Catalyzes the reversible transfer of the terminal phosphoryl group of ATP to L-arginine. This chain is Arginine kinase, found in Limulus polyphemus (Atlantic horseshoe crab).